A 431-amino-acid polypeptide reads, in one-letter code: 3-phosphoshikimate 1-carboxyvinyltransferase (431 aa).

3-phosphoshikimate-binding residues include Lys22, Ser23, and Arg27. Lys22 contacts phosphoenolpyruvate. Residues Gly94 and Arg122 each contribute to the phosphoenolpyruvate site. 3-phosphoshikimate contacts are provided by Ser168, Ser169, Gln170, Ser196, Asp315, and Lys342. Gln170 lines the phosphoenolpyruvate pocket. Asp315 (proton acceptor) is an active-site residue. Positions 346, 390, and 414 each coordinate phosphoenolpyruvate.

This sequence belongs to the EPSP synthase family. Monomer.

It localises to the cytoplasm. It carries out the reaction 3-phosphoshikimate + phosphoenolpyruvate = 5-O-(1-carboxyvinyl)-3-phosphoshikimate + phosphate. It participates in metabolic intermediate biosynthesis; chorismate biosynthesis; chorismate from D-erythrose 4-phosphate and phosphoenolpyruvate: step 6/7. In terms of biological role, catalyzes the transfer of the enolpyruvyl moiety of phosphoenolpyruvate (PEP) to the 5-hydroxyl of shikimate-3-phosphate (S3P) to produce enolpyruvyl shikimate-3-phosphate and inorganic phosphate. In Nitrosomonas europaea (strain ATCC 19718 / CIP 103999 / KCTC 2705 / NBRC 14298), this protein is 3-phosphoshikimate 1-carboxyvinyltransferase.